We begin with the raw amino-acid sequence, 295 residues long: uncharacterized protein (295 aa).

The ABC transporter domain occupies 2–226 (LSIESLCKSY…QQTNVFTLSV (225 aa)). 34-41 (GPNGAGKT) is an ATP binding site.

Belongs to the ABC transporter superfamily.

This is an uncharacterized protein from Bacillus subtilis (strain 168).